Reading from the N-terminus, the 204-residue chain is Glycerol-3-phosphate acyltransferase (204 aa).

Transmembrane regions (helical) follow at residues 8–28 (ILIF…CYIF), 53–73 (VLAA…VVIA), 81–101 (FITA…IFFG), 116–136 (FGFS…VAII), and 155–175 (VIFT…IIIL).

Belongs to the PlsY family. As to quaternary structure, probably interacts with PlsX.

The protein localises to the cell inner membrane. It carries out the reaction an acyl phosphate + sn-glycerol 3-phosphate = a 1-acyl-sn-glycero-3-phosphate + phosphate. Its pathway is lipid metabolism; phospholipid metabolism. Its function is as follows. Catalyzes the transfer of an acyl group from acyl-phosphate (acyl-PO(4)) to glycerol-3-phosphate (G3P) to form lysophosphatidic acid (LPA). This enzyme utilizes acyl-phosphate as fatty acyl donor, but not acyl-CoA or acyl-ACP. The polypeptide is Glycerol-3-phosphate acyltransferase (Francisella tularensis subsp. holarctica (strain OSU18)).